A 550-amino-acid chain; its full sequence is Hydroxylamine reductase (550 aa).

[2Fe-2S] cluster contacts are provided by Cys-3, Cys-6, Cys-18, and Cys-25. 8 residues coordinate hybrid [4Fe-2O-2S] cluster: His-249, Glu-273, Cys-317, Cys-405, Cys-433, Cys-458, Glu-492, and Lys-494. At Cys-405 the chain carries Cysteine persulfide.

It belongs to the HCP family. [2Fe-2S] cluster serves as cofactor. Hybrid [4Fe-2O-2S] cluster is required as a cofactor.

The protein localises to the cytoplasm. The catalysed reaction is A + NH4(+) + H2O = hydroxylamine + AH2 + H(+). Catalyzes the reduction of hydroxylamine to form NH(3) and H(2)O. The chain is Hydroxylamine reductase from Salmonella choleraesuis (strain SC-B67).